Here is a 702-residue protein sequence, read N- to C-terminus: Autophagy-related protein 9 (702 aa).

Residues 1–205 (MFYQPAQNKK…GKGLSCIIVH (205 aa)) are Cytoplasmic-facing. The interval 35–128 (QESLDSDEDE…SKQKPALPNF (94 aa)) is disordered. Residues 38 to 47 (LDSDEDESSP) are compositionally biased toward acidic residues. Residues 94–107 (SSKVPSKHPSPSFP) show a composition bias toward low complexity. The segment covering 108–120 (ETTSLRNLQNGSK) has biased composition (polar residues). A helical membrane pass occupies residues 206–223 (RLFQILTVSFVIGFTTFI). Residues 224–251 (TSCIDWPAVTPHGSLAGVTKSQCIAQMS) are Lumenal-facing. The helical transmembrane segment at 252–270 (PITYLVLWLFLSFLLALWI) threads the bilayer. At 271-421 (YYLTDIPRLW…RRRFIVAGFL (151 aa)) the chain is on the cytoplasmic side. The stretch at 422–446 (NCLFAPIVAIYLVIHNFFRYFNEYH) is an intramembrane region. Over 447–496 (KNPGALSTRRYTPLALWTFREYNELQHFFDERINDSYAAASHYVSQFPDF) the chain is Cytoplasmic. A helical membrane pass occupies residues 497–522 (NMIRLFKYISFILGSFTAILVIITVF). Residues 523-537 (DPELMVTFEITKDRS) lie on the Lumenal side of the membrane. The helical transmembrane segment at 538–555 (VLFYLGLFGSLIAVSRSI) threads the bilayer. The Cytoplasmic segment spans residues 556–603 (IPDETLVFAPEKALRRVITFTHYMPGWWSDNMHSKAVQQEFCSLYSYR). Residues 604–624 (IVNLLWEILGILLTPVLLFFT) lie within the membrane without spanning it. Over 625 to 702 (FPSCSQDIVD…NTEAPRRDLR (78 aa)) the chain is Cytoplasmic.

The protein belongs to the ATG9 family. In terms of assembly, homotrimer; forms a homotrimer with a central pore that forms a path between the two membrane leaflets. Interacts with ctl1. Phosphorylated by atg1. Atg1 phosphorylation is required for preautophagosome elongation.

Its subcellular location is the preautophagosomal structure membrane. The protein resides in the cytoplasmic vesicle membrane. It is found in the golgi apparatus membrane. The protein localises to the endoplasmic reticulum membrane. The catalysed reaction is a 1,2-diacyl-sn-glycero-3-phosphocholine(in) = a 1,2-diacyl-sn-glycero-3-phosphocholine(out). It carries out the reaction a 1,2-diacyl-sn-glycero-3-phospho-L-serine(in) = a 1,2-diacyl-sn-glycero-3-phospho-L-serine(out). The enzyme catalyses a 1,2-diacyl-sn-glycero-3-phosphoethanolamine(in) = a 1,2-diacyl-sn-glycero-3-phosphoethanolamine(out). It catalyses the reaction a 1,2-diacyl-sn-glycero-3-phospho-(1D-myo-inositol-3-phosphate)(in) = a 1,2-diacyl-sn-glycero-3-phospho-(1D-myo-inositol-3-phosphate)(out). In terms of biological role, phospholipid scramblase involved in autophagy and cytoplasm to vacuole transport (Cvt) vesicle formation. Cycles between the preautophagosomal structure/phagophore assembly site (PAS) and the cytoplasmic vesicle pool and supplies membrane for the growing autophagosome. Lipid scramblase activity plays a key role in preautophagosomal structure/phagophore assembly by distributing the phospholipids that arrive through atg2 from the cytoplasmic to the luminal leaflet of the bilayer, thereby driving autophagosomal membrane expansion. Also involved in endoplasmic reticulum-specific autophagic process and is essential for the survival of cells subjected to severe ER stress. Different machineries are required for anterograde trafficking to the PAS during either the Cvt pathway or bulk autophagy and for retrograde trafficking. Has a role in meiosis and sporulation. The protein is Autophagy-related protein 9 of Schizosaccharomyces pombe (strain 972 / ATCC 24843) (Fission yeast).